Consider the following 423-residue polypeptide: Structure-specific endonuclease subunit SLX1 (423 aa).

The GIY-YIG domain occupies 23–105; the sequence is AFYCCYLLRS…QNTKVSRHAD (83 aa). 2 disordered regions span residues 300 to 334 and 365 to 406; these read RRRRQAGTPKGQGLKSVRGRGRGRGHSEDESDALQ and AHRP…LGLQ.

It belongs to the SLX1 family. As to quaternary structure, forms a heterodimer with SLX4. It depends on a divalent metal cation as a cofactor.

The protein localises to the nucleus. Catalytic subunit of the SLX1-SLX4 structure-specific endonuclease that resolves DNA secondary structures generated during DNA repair and recombination. Has endonuclease activity towards branched DNA substrates, introducing single-strand cuts in duplex DNA close to junctions with ss-DNA. In Paracoccidioides brasiliensis (strain Pb03), this protein is Structure-specific endonuclease subunit SLX1.